We begin with the raw amino-acid sequence, 235 residues long: Thiamine import ATP-binding protein ThiQ (235 aa).

Positions 2–230 (LKLIDITWLY…QASASALLGI (229 aa)) constitute an ABC transporter domain. 32–39 (GPSGAGKS) contributes to the ATP binding site.

The protein belongs to the ABC transporter superfamily. Thiamine importer (TC 3.A.1.19.1) family. The complex is composed of two ATP-binding proteins (ThiQ), two transmembrane proteins (ThiP) and a solute-binding protein (ThiB).

It localises to the cell inner membrane. It carries out the reaction thiamine(out) + ATP + H2O = thiamine(in) + ADP + phosphate + H(+). Functionally, part of the ABC transporter complex ThiBPQ involved in thiamine import. Responsible for energy coupling to the transport system. The protein is Thiamine import ATP-binding protein ThiQ of Salmonella paratyphi A (strain ATCC 9150 / SARB42).